Reading from the N-terminus, the 473-residue chain is 3-isopropylmalate dehydratase large subunit 2 (473 aa).

The [4Fe-4S] cluster site is built by Cys350, Cys410, and Cys413.

The protein belongs to the aconitase/IPM isomerase family. LeuC type 1 subfamily. Heterodimer of LeuC and LeuD. Requires [4Fe-4S] cluster as cofactor.

The enzyme catalyses (2R,3S)-3-isopropylmalate = (2S)-2-isopropylmalate. Its pathway is amino-acid biosynthesis; L-leucine biosynthesis; L-leucine from 3-methyl-2-oxobutanoate: step 2/4. Functionally, catalyzes the isomerization between 2-isopropylmalate and 3-isopropylmalate, via the formation of 2-isopropylmaleate. This is 3-isopropylmalate dehydratase large subunit 2 from Salmonella typhimurium (strain LT2 / SGSC1412 / ATCC 700720).